A 689-amino-acid polypeptide reads, in one-letter code: Translation initiation factor IF-2 (689 aa).

The disordered stretch occupies residues Asp41–Ala109. The segment covering Arg61–Arg70 has biased composition (basic residues). Positions Arg80–Arg94 are enriched in low complexity. The span at Ala96–Ala109 shows a compositional bias: basic and acidic residues. The tr-type G domain maps to Glu192–Arg361. A G1 region spans residues Gly201–Thr208. Gly201–Thr208 is a binding site for GTP. Positions Gly226–His230 are G2. Residues Asp247–Gly250 form a G3 region. GTP contacts are provided by residues Asp247–His251 and Asn301–Asp304. The interval Asn301–Asp304 is G4. The segment at Ser337–Lys339 is G5.

It belongs to the TRAFAC class translation factor GTPase superfamily. Classic translation factor GTPase family. IF-2 subfamily.

It localises to the cytoplasm. In terms of biological role, one of the essential components for the initiation of protein synthesis. Protects formylmethionyl-tRNA from spontaneous hydrolysis and promotes its binding to the 30S ribosomal subunits. Also involved in the hydrolysis of GTP during the formation of the 70S ribosomal complex. This is Translation initiation factor IF-2 from Rubrobacter xylanophilus (strain DSM 9941 / JCM 11954 / NBRC 16129 / PRD-1).